A 308-amino-acid chain; its full sequence is Beta-carotene hydroxylase 2, chloroplastic (308 aa).

The transit peptide at 1–59 directs the protein to the chloroplast; the sequence is MAAARISFSSTSRTSYYRHSPFLGPKPTPTTPSVYPITPFSPNLGSILRCRRRPSFTVC. Transmembrane regions (helical) follow at residues 105–125 and 139–159; these read YLVAAVMSSFGITSMAVMAVY and FSEMFGTFALSVGAAVGMEFW. The Fatty acid hydroxylase domain occupies 152 to 279; that stretch reads AAVGMEFWAR…KFNGVPYGLF (128 aa). Residues 164-169 carry the Histidine box-1 motif; sequence HKALWH. A Histidine box-2 motif is present at residues 176–180; the sequence is HESHH. Transmembrane regions (helical) follow at residues 191–211 and 215–235; these read DVFAIINAVPAIALLDYGFFH and IPGLCFGAGLGITVFGMAYMF. Positions 237–242 match the Histidine box-3 motif; the sequence is HDGLVH. Positions 263 to 267 match the Histidine box-4 motif; that stretch reads HSLHH.

The protein belongs to the sterol desaturase family.

It is found in the plastid. Its subcellular location is the chloroplast membrane. It carries out the reaction all-trans-beta-carotene + 4 reduced [2Fe-2S]-[ferredoxin] + 2 O2 + 4 H(+) = all-trans-zeaxanthin + 4 oxidized [2Fe-2S]-[ferredoxin] + 2 H2O. It catalyses the reaction all-trans-beta-carotene + 2 reduced [2Fe-2S]-[ferredoxin] + O2 + 2 H(+) = beta-cryptoxanthin + 2 oxidized [2Fe-2S]-[ferredoxin] + H2O. The catalysed reaction is beta-cryptoxanthin + 2 reduced [2Fe-2S]-[ferredoxin] + O2 + 2 H(+) = all-trans-zeaxanthin + 2 oxidized [2Fe-2S]-[ferredoxin] + H2O. With respect to regulation, inhibited by o-phenanthroline and 8-hydroxyquinoline. In terms of biological role, nonheme diiron monooxygenase involved in the biosynthesis of xanthophylls. Specific for beta-ring hydroxylations of beta-carotene. Produces beta-cryptoxanthin and zeaxanthin. Uses ferredoxin as an electron donor. This is Beta-carotene hydroxylase 2, chloroplastic from Capsicum annuum (Capsicum pepper).